Here is a 611-residue protein sequence, read N- to C-terminus: tRNA uridine 5-carboxymethylaminomethyl modification enzyme MnmG (611 aa).

12 to 17 (GGGHSG) is an FAD binding site. 271–285 (GPRYCPSIEEKVYRF) provides a ligand contact to NAD(+).

This sequence belongs to the MnmG family. In terms of assembly, homodimer. Heterotetramer of two MnmE and two MnmG subunits. FAD is required as a cofactor.

It localises to the cytoplasm. Functionally, NAD-binding protein involved in the addition of a carboxymethylaminomethyl (cmnm) group at the wobble position (U34) of certain tRNAs, forming tRNA-cmnm(5)s(2)U34. The polypeptide is tRNA uridine 5-carboxymethylaminomethyl modification enzyme MnmG (Karelsulcia muelleri (strain GWSS) (Sulcia muelleri)).